Reading from the N-terminus, the 692-residue chain is Elongation factor G (692 aa).

The tr-type G domain maps to 8–282; the sequence is ERTRNIGIMA…AIVYYLPSPV (275 aa). GTP-binding positions include 17 to 24, 81 to 85, and 135 to 138; these read AHIDAGKT, DTPGH, and NKMD.

The protein belongs to the TRAFAC class translation factor GTPase superfamily. Classic translation factor GTPase family. EF-G/EF-2 subfamily.

It localises to the cytoplasm. Functionally, catalyzes the GTP-dependent ribosomal translocation step during translation elongation. During this step, the ribosome changes from the pre-translocational (PRE) to the post-translocational (POST) state as the newly formed A-site-bound peptidyl-tRNA and P-site-bound deacylated tRNA move to the P and E sites, respectively. Catalyzes the coordinated movement of the two tRNA molecules, the mRNA and conformational changes in the ribosome. This is Elongation factor G from Carboxydothermus hydrogenoformans (strain ATCC BAA-161 / DSM 6008 / Z-2901).